The sequence spans 100 residues: Elevenin (100 aa).

The N-terminal stretch at 1–24 (MALSQKALLVLVLSMLLTASDSWA) is a signal peptide. A disulfide bridge links Cys-29 with Cys-38. A propeptide spanning residues 44-100 (KRGGDSLSVGGSAELDDTLTDPFLKSEEPKEWRELTRLSRVLQTFLSHPTGEMEQHD) is cleaved from the precursor.

Belongs to the elevenin family. In terms of assembly, monomer. In terms of tissue distribution, expressed by the venom duct.

It is found in the secreted. Functionally, may mimic the function of prey elevenin neuropeptide. In vivo, intracranial injection in mice induces hyperactivity. This is Elevenin from Conus ammiralis (Admiral cone).